The primary structure comprises 114 residues: Small ribosomal subunit protein uS17 (114 aa).

The protein belongs to the universal ribosomal protein uS17 family. As to quaternary structure, part of the 30S ribosomal subunit.

One of the primary rRNA binding proteins, it binds specifically to the 5'-end of 16S ribosomal RNA. This Sulfolobus acidocaldarius (strain ATCC 33909 / DSM 639 / JCM 8929 / NBRC 15157 / NCIMB 11770) protein is Small ribosomal subunit protein uS17.